The primary structure comprises 645 residues: L-aspartate oxidase, chloroplastic (645 aa).

Residues 1-70 (MAALMNGFGS…RMRHKVGSIR (70 aa)) constitute a chloroplast transit peptide. FAD is bound by residues 92–95 (SGVA), Lys-114, 121–128 (NTNYAQGG), and Asp-292. Arg-368 functions as the Proton donor/acceptor in the catalytic mechanism. FAD-binding positions include Glu-453 and 469-470 (SL).

It belongs to the FAD-dependent oxidoreductase 2 family. NadB subfamily. The cofactor is FAD.

The protein resides in the plastid. It localises to the chloroplast. It carries out the reaction L-aspartate + O2 = iminosuccinate + H2O2. Its pathway is cofactor biosynthesis; NAD(+) biosynthesis; iminoaspartate from L-aspartate (oxidase route): step 1/1. Catalyzes the oxidation of L-aspartate to iminoaspartate. This Oryza sativa subsp. japonica (Rice) protein is L-aspartate oxidase, chloroplastic.